Here is a 193-residue protein sequence, read N- to C-terminus: Selenate reductase assembly chaperone protein (193 aa).

Belongs to the type II DMSO reductase enzyme chaperone family.

The protein localises to the cytoplasm. Its function is as follows. May function as a system-specific chaperone protein essential for the assembly of an active selenate reductase SerABC. The protein is Selenate reductase assembly chaperone protein of Thauera selenatis.